Reading from the N-terminus, the 89-residue chain is MVKLRLKRCGKKQRAVYRIVAIDVRSRREGRDLRKVGFYDPIKNQTYLNIPVILYFLERGAQPTGTVQDISKRAGVFMELSSNQQTKFH.

The protein belongs to the bacterial ribosomal protein bS16 family.

The protein resides in the plastid. It is found in the chloroplast. The sequence is that of Small ribosomal subunit protein bS16c from Glycine max (Soybean).